We begin with the raw amino-acid sequence, 205 residues long: tRNA (pseudouridine(54)-N(1))-methyltransferase (205 aa).

Residues Leu136, Gly156, 179–184 (LSPLEL), and Cys189 contribute to the S-adenosyl-L-methionine site.

This sequence belongs to the methyltransferase superfamily. TrmY family. As to quaternary structure, homodimer.

The protein localises to the cytoplasm. It catalyses the reaction pseudouridine(54) in tRNA + S-adenosyl-L-methionine = N(1)-methylpseudouridine(54) in tRNA + S-adenosyl-L-homocysteine + H(+). In terms of biological role, specifically catalyzes the N1-methylation of pseudouridine at position 54 (Psi54) in tRNAs. This chain is tRNA (pseudouridine(54)-N(1))-methyltransferase, found in Methanocaldococcus jannaschii (strain ATCC 43067 / DSM 2661 / JAL-1 / JCM 10045 / NBRC 100440) (Methanococcus jannaschii).